The primary structure comprises 410 residues: uncharacterized protein (410 aa).

A compositionally biased stretch (polar residues) spans Q178–T187. 2 disordered regions span residues Q178–Q203 and R236–Q272. A compositionally biased stretch (low complexity) spans Q188–A198. The segment covering R236–T263 has biased composition (basic and acidic residues).

This is an uncharacterized protein from Haemophilus influenzae (strain ATCC 51907 / DSM 11121 / KW20 / Rd).